The chain runs to 383 residues: Schlafen-like protein 3 (383 aa).

The interval 118 to 266 is SLFN-like fold; the sequence is FDYQSNFSDV…SDKVYQISSG (149 aa). The helical transmembrane segment at 354-374 threads the bilayer; sequence LLDIQNIGWIFFGTALSFCIY.

It belongs to the Schlafen family. Component of the PUCH (precursor of 21U RNA 5'-end cleavage holoenzyme) complex; consisting of tofu-1, tofu-2 and either slfl-3 or slfl-4. Within the complex, interacts (via N-terminus) with tofu-2 (via N-terminus); the presence of tofu-1 is required for the interaction.

It localises to the mitochondrion membrane. Its function is as follows. Component of the trimeric PUCH (precursor of 21U RNA 5'-end cleavage holoenzyme) complex, that acts as an endoribonuclease processing the 5'-end of precursor Piwi-interacting RNAs (piRNAs). The PUCH complex consists of tofu-1, tofu-2 and either slfl-3 or slfl-4, where tofu-2 exhibits endoribonuclease activity. PUCH-mediated processing strictly requires a 7-methyl-G cap (m7 G-cap) and an uracil at position three (U3). PUCH also exhibits a strict bias for piRNA precursors with an A or G at position 1. Mature piRNA production is enhanced by the interaction of PUCH with the PETISCO complex, which is stabilizing piRNA precursors and allows their processing by PUCH. The sequence is that of Schlafen-like protein 3 from Caenorhabditis elegans.